A 1084-amino-acid polypeptide reads, in one-letter code: CRISPR-associated endonuclease Cas9 (1084 aa).

Aspartate 8 serves as the catalytic For RuvC-like nuclease domain. Residues aspartate 8, glutamate 496, and glutamate 500 each contribute to the Mn(2+) site. The region spanning 504–665 is the HNH Cas9-type domain; that stretch reads TEKRAREMDG…MDEEIDARSM (162 aa). Histidine 573 (proton acceptor for HNH nuclease domain) is an active-site residue. Histidine 727 contacts Mn(2+).

The protein belongs to the CRISPR-associated protein Cas9 family. Subtype II-C subfamily. Monomer. Binds crRNA and tracrRNA. The cofactor is Mg(2+).

CRISPR (clustered regularly interspaced short palindromic repeat) is an adaptive immune system that provides protection against mobile genetic elements (viruses, transposable elements and conjugative plasmids). CRISPR clusters contain spacers, sequences complementary to antecedent mobile elements, and target invading nucleic acids. CRISPR clusters are transcribed and processed into CRISPR RNA (crRNA). In type II CRISPR systems correct processing of pre-crRNA requires a trans-encoded small RNA (tracrRNA), endogenous ribonuclease 3 (rnc) and this protein. The tracrRNA serves as a guide for ribonuclease 3-aided processing of pre-crRNA. Subsequently Cas9/crRNA/tracrRNA endonucleolytically cleaves linear or circular dsDNA target complementary to the spacer; Cas9 is inactive in the absence of the 2 guide RNAs (gRNA). Cas9 recognizes the protospacer adjacent motif (PAM) in the CRISPR repeat sequences to help distinguish self versus nonself, as targets within the bacterial CRISPR locus do not have PAMs. PAM recognition is also required for catalytic activity. The polypeptide is CRISPR-associated endonuclease Cas9 (Corynebacterium diphtheriae (strain ATCC 700971 / NCTC 13129 / Biotype gravis)).